The following is a 359-amino-acid chain: MKFCNPFLRLILRRKPISMISPTMFLLSSPTTSSSIGHSNGMLRSRSEDNLNKLGECMDNMDEDVSKLFIEFQQTDLREDPDLFRLLNHYFTTSKGVSQLCESLRTCLERSENNECLLLDEALVDFELEKLGYGGSLEEASFRKTYRDLRNFNAFYNNNSGEEDDLDYCEFLRKFQTCHEELAKMVVKLEKTMKDIDKKLRRVRGRRAIVTAALLAPVIAVIFLSKLVAGLVPIEGLSTFVASRWRKSTESLKREKTAMSSMERGIIVALKQVEKISKLVSRLESVERSISLTAEFAVKKRSSVVVAMREVEEERKRLKSTLVDLDRETGLCNGFAQFGRTVALEKITEFLSRGDKSSK.

Positions 179–208 (HEELAKMVVKLEKTMKDIDKKLRRVRGRRA) form a coiled coil. Residues 214–234 (LLAPVIAVIFLSKLVAGLVPI) form a helical membrane-spanning segment.

Belongs to the UPF0496 family.

The protein resides in the membrane. This is UPF0496 protein At3g57100 from Arabidopsis thaliana (Mouse-ear cress).